Reading from the N-terminus, the 80-residue chain is Defensin-like protein 50 (80 aa).

The N-terminal stretch at 1-27 (MGFTKIVVTFFLVVMLAVSSSSQNAMA) is a signal peptide. Cystine bridges form between Cys-39–Cys-79, Cys-43–Cys-66, Cys-52–Cys-77, and Cys-56–Cys-78.

This sequence belongs to the DEFL family.

It localises to the secreted. The polypeptide is Defensin-like protein 50 (LCR49) (Arabidopsis thaliana (Mouse-ear cress)).